The sequence spans 341 residues: MRILGIETSCDETGIAIYDDEKGILANQLYSQIKLHADYGGVVPELASRDHVRKTVPLIQAALREADLTPADLDGVAYTAGPGLVGALLVGATVGRSLAFAWGVPAVPVHHMEGHLLAPMLEENPPAFPFVALLVSGGHTQLISVTGIGEYRLLGESIDDAAGEAFDKTAKLLGLDYPGGPVLSRMAQQGVPGRFVFPRPMTDRPGLDLSFSGLKTFAANTIHANGDDAQTRADIARAFEDAVVDTLAIKCRRALDQTGFQRLVMAGGVSANRALRGRLAQMMQQRGGAVFYARPEFCTDNGAMIAYAGMVRLKSGVDADLSISVRPRWPLAELPPVAARS.

Residues H111 and H115 each coordinate Fe cation. Substrate contacts are provided by residues 134-138, D167, G180, and N272; that span reads LVSGG. A Fe cation-binding site is contributed by D300.

The protein belongs to the KAE1 / TsaD family. Requires Fe(2+) as cofactor.

It localises to the cytoplasm. It carries out the reaction L-threonylcarbamoyladenylate + adenosine(37) in tRNA = N(6)-L-threonylcarbamoyladenosine(37) in tRNA + AMP + H(+). Required for the formation of a threonylcarbamoyl group on adenosine at position 37 (t(6)A37) in tRNAs that read codons beginning with adenine. Is involved in the transfer of the threonylcarbamoyl moiety of threonylcarbamoyl-AMP (TC-AMP) to the N6 group of A37, together with TsaE and TsaB. TsaD likely plays a direct catalytic role in this reaction. In Edwardsiella ictaluri (strain 93-146), this protein is tRNA N6-adenosine threonylcarbamoyltransferase.